The primary structure comprises 596 residues: Proline--tRNA ligase (596 aa).

The protein belongs to the class-II aminoacyl-tRNA synthetase family. ProS type 1 subfamily. In terms of assembly, homodimer.

It localises to the cytoplasm. It carries out the reaction tRNA(Pro) + L-proline + ATP = L-prolyl-tRNA(Pro) + AMP + diphosphate. In terms of biological role, catalyzes the attachment of proline to tRNA(Pro) in a two-step reaction: proline is first activated by ATP to form Pro-AMP and then transferred to the acceptor end of tRNA(Pro). As ProRS can inadvertently accommodate and process non-cognate amino acids such as alanine and cysteine, to avoid such errors it has two additional distinct editing activities against alanine. One activity is designated as 'pretransfer' editing and involves the tRNA(Pro)-independent hydrolysis of activated Ala-AMP. The other activity is designated 'posttransfer' editing and involves deacylation of mischarged Ala-tRNA(Pro). The misacylated Cys-tRNA(Pro) is not edited by ProRS. In Prochlorococcus marinus (strain NATL2A), this protein is Proline--tRNA ligase.